The following is a 117-amino-acid chain: Large ribosomal subunit protein bL20 (117 aa).

Belongs to the bacterial ribosomal protein bL20 family.

Functionally, binds directly to 23S ribosomal RNA and is necessary for the in vitro assembly process of the 50S ribosomal subunit. It is not involved in the protein synthesizing functions of that subunit. The polypeptide is Large ribosomal subunit protein bL20 (Ruminiclostridium cellulolyticum (strain ATCC 35319 / DSM 5812 / JCM 6584 / H10) (Clostridium cellulolyticum)).